Reading from the N-terminus, the 362-residue chain is MTNYYAEITGWGKCLPPAVLSNDDLSTFLDTSDEWIRTRTGIENRRISHVNTSDLATVAAKQALARAGITAQDIDLIIVATCSPDSLIPNIASMVQKNLEIEAAAAFDLNAACTGFVYGLETGTRLIQSGAYRHALIIGAERLSFYIDWAMRDTAVLFGDGAGAVVLSRTEEAVGLQNAKSGCDAQGRDILSVPKFGTSMDRFAADNGYWDFNFVGKEIFKRAVKGMGSAAAHVLAHAGMSKDDINVVIPHQANIRIIQTLCDLSGIDQSKAFVNIQKYGNTSAATVPIALCEAVEQGHIKAGDNILLAAFGAGLTWGAGLVKWGQRVEAISESDAALPECDKSALELLKNAIELCNARRDK.

Residues cysteine 113 and histidine 251 contribute to the active site. The tract at residues 252 to 256 is ACP-binding; that stretch reads QANIR. The active site involves asparagine 281.

Belongs to the thiolase-like superfamily. FabH family. In terms of assembly, homodimer.

It localises to the cytoplasm. The catalysed reaction is malonyl-[ACP] + acetyl-CoA + H(+) = 3-oxobutanoyl-[ACP] + CO2 + CoA. It participates in lipid metabolism; fatty acid biosynthesis. Catalyzes the condensation reaction of fatty acid synthesis by the addition to an acyl acceptor of two carbons from malonyl-ACP. Catalyzes the first condensation reaction which initiates fatty acid synthesis and may therefore play a role in governing the total rate of fatty acid production. Possesses both acetoacetyl-ACP synthase and acetyl transacylase activities. Its substrate specificity determines the biosynthesis of branched-chain and/or straight-chain of fatty acids. This Vibrio vulnificus (strain CMCP6) protein is Beta-ketoacyl-[acyl-carrier-protein] synthase III 2.